An 83-amino-acid polypeptide reads, in one-letter code: Small ribosomal subunit protein eS27 (83 aa).

The C4-type zinc-finger motif lies at 37–59 (CSGCFKISTVFSHATTVVVCVGC).

Belongs to the eukaryotic ribosomal protein eS27 family. It depends on Zn(2+) as a cofactor.

The polypeptide is Small ribosomal subunit protein eS27 (rps-27) (Caenorhabditis elegans).